The following is a 349-amino-acid chain: Ribosomal RNA small subunit methyltransferase C (349 aa).

This sequence belongs to the methyltransferase superfamily. RsmC family. Monomer.

It localises to the cytoplasm. It carries out the reaction guanosine(1207) in 16S rRNA + S-adenosyl-L-methionine = N(2)-methylguanosine(1207) in 16S rRNA + S-adenosyl-L-homocysteine + H(+). Functionally, specifically methylates the guanine in position 1207 of 16S rRNA in the 30S particle. This Psychromonas ingrahamii (strain DSM 17664 / CCUG 51855 / 37) protein is Ribosomal RNA small subunit methyltransferase C.